The sequence spans 639 residues: Extracellular metalloproteinase 1 (639 aa).

The signal sequence occupies residues 1-19; that stretch reads MHGLLLAAGLISLPLHVLA. Positions 20-250 are excised as a propeptide; the sequence is HPQPSSTSLA…VHNVVDYVAH (231 aa). An N-linked (GlcNAc...) asparagine glycan is attached at N291. H434 lines the Zn(2+) pocket. E435 is a catalytic residue. H438 contributes to the Zn(2+) binding site. N-linked (GlcNAc...) asparagine glycosylation occurs at N598.

This sequence belongs to the peptidase M36 family. The cofactor is Zn(2+).

The protein resides in the secreted. Secreted metalloproteinase probably acting as a virulence factor. The sequence is that of Extracellular metalloproteinase 1 (MEP1) from Arthroderma otae (strain ATCC MYA-4605 / CBS 113480) (Microsporum canis).